The following is a 118-amino-acid chain: Large ribosomal subunit protein uL22 (118 aa).

Belongs to the universal ribosomal protein uL22 family. As to quaternary structure, part of the 50S ribosomal subunit.

Functionally, this protein binds specifically to 23S rRNA; its binding is stimulated by other ribosomal proteins, e.g. L4, L17, and L20. It is important during the early stages of 50S assembly. It makes multiple contacts with different domains of the 23S rRNA in the assembled 50S subunit and ribosome. In terms of biological role, the globular domain of the protein is located near the polypeptide exit tunnel on the outside of the subunit, while an extended beta-hairpin is found that lines the wall of the exit tunnel in the center of the 70S ribosome. The sequence is that of Large ribosomal subunit protein uL22 from Synechococcus sp. (strain RCC307).